The following is a 226-amino-acid chain: Thymidylate kinase (226 aa).

Residue 16–23 participates in ATP binding; the sequence is GIDGAGKT.

Belongs to the thymidylate kinase family.

It catalyses the reaction dTMP + ATP = dTDP + ADP. Its function is as follows. Phosphorylation of dTMP to form dTDP in both de novo and salvage pathways of dTTP synthesis. This chain is Thymidylate kinase, found in Xanthomonas euvesicatoria pv. vesicatoria (strain 85-10) (Xanthomonas campestris pv. vesicatoria).